A 578-amino-acid chain; its full sequence is Penicillin-binding protein activator LpoA (578 aa).

Positions Met-1–Ala-30 are cleaved as a signal peptide. The N-palmitoyl cysteine moiety is linked to residue Cys-31. Residue Cys-31 is the site of S-diacylglycerol cysteine attachment.

It belongs to the LpoA family. Interacts with PBP1a.

The protein localises to the cell outer membrane. Its function is as follows. Regulator of peptidoglycan synthesis that is essential for the function of penicillin-binding protein 1A (PBP1a). The protein is Penicillin-binding protein activator LpoA of Glaesserella parasuis serovar 5 (strain SH0165) (Haemophilus parasuis).